An 86-amino-acid polypeptide reads, in one-letter code: Neurotoxin LmNaTx35.2 (86 aa).

Positions 1 to 21 are cleaved as a signal peptide; the sequence is MQLKIQLLMLVLMTVLTGVLG. Positions 22–85 constitute an LCN-type CS-alpha/beta domain; the sequence is KDGYVVHEDT…VYGDKGTYCW (64 aa). Cystine bridges form between cysteine 33-cysteine 84, cysteine 37-cysteine 60, cysteine 46-cysteine 65, and cysteine 50-cysteine 67.

Belongs to the long (4 C-C) scorpion toxin superfamily. Sodium channel inhibitor family. Alpha subfamily. As to expression, expressed by the venom gland.

The protein localises to the secreted. Its function is as follows. Binds voltage-independently at site-3 of voltage-gated sodium channels (Nav) and inhibits the inactivation of the activated channels, thereby blocking neuronal transmission. This is Neurotoxin LmNaTx35.2 from Lychas mucronatus (Chinese swimming scorpion).